Reading from the N-terminus, the 374-residue chain is Acetylxylan esterase (374 aa).

The N-terminal stretch at Met1–Ala22 is a signal peptide. One can recognise a CBM1 domain in the interval Val23 to Gln57. A ser/Thr/Pro-rich linker region spans residues Ser58–Ala99. A disordered region spans residues Gly60 to Pro86. Low complexity predominate over residues Pro63–Val73. Residues Gly100–Leu374 are catalytic. Asn114 is a glycosylation site (N-linked (GlcNAc...) asparagine). Catalysis depends on Ser219, which acts as the Charge relay system. The N-linked (GlcNAc...) asparagine glycan is linked to Asn320.

Belongs to the carbohydrate esterase 1 (CE1) family. AxeA subfamily. As to quaternary structure, monomer. In terms of processing, glycosylated.

The protein localises to the secreted. The catalysed reaction is Deacetylation of xylans and xylo-oligosaccharides.. It participates in glycan degradation; xylan degradation. Its function is as follows. Acetylxylan esterase involved in the hydrolysis of xylan, a major structural heterogeneous polysaccharide found in plant biomass representing the second most abundant polysaccharide in the biosphere, after cellulose. Degrades acetylated xylans by cleaving acetyl side groups from the hetero-xylan backbone. This Coprinopsis cinerea (strain Okayama-7 / 130 / ATCC MYA-4618 / FGSC 9003) (Inky cap fungus) protein is Acetylxylan esterase.